Reading from the N-terminus, the 451-residue chain is Kynureninase (451 aa).

Residues Leu-131, Ser-132, 159–162 (FPSD), Ser-215, Asp-244, His-247, and Tyr-269 contribute to the pyridoxal 5'-phosphate site. Lys-270 is modified (N6-(pyridoxal phosphate)lysine). The pyridoxal 5'-phosphate site is built by Trp-303 and Asn-331.

It belongs to the kynureninase family. In terms of assembly, homodimer. Pyridoxal 5'-phosphate serves as cofactor.

It is found in the cytoplasm. It catalyses the reaction L-kynurenine + H2O = anthranilate + L-alanine + H(+). The enzyme catalyses 3-hydroxy-L-kynurenine + H2O = 3-hydroxyanthranilate + L-alanine + H(+). It functions in the pathway amino-acid degradation; L-kynurenine degradation; L-alanine and anthranilate from L-kynurenine: step 1/1. It participates in cofactor biosynthesis; NAD(+) biosynthesis; quinolinate from L-kynurenine: step 2/3. In terms of biological role, catalyzes the cleavage of L-kynurenine (L-Kyn) and L-3-hydroxykynurenine (L-3OHKyn) into anthranilic acid (AA) and 3-hydroxyanthranilic acid (3-OHAA), respectively. The polypeptide is Kynureninase (Dictyostelium discoideum (Social amoeba)).